A 631-amino-acid chain; its full sequence is NADPH oxidoreductase A (631 aa).

A Flavodoxin-like domain is found at 73–212 (ILILYGTEYG…CFDRYIDTVC (140 aa)). FMN-binding positions include 79–83 (TEYGL) and 160–191 (VLALGDRSYPHYCAAGKTLDKQFEEMGAKRFR). An FAD-binding FR-type domain is found at 247–480 (KKPYSSKLLV…INNNPDFRLP (234 aa)). 249–299 (PYSSKLLVKRVLTKGDKVGIHLEFELGDSELKYVPGDALAILPDNAASEVS) contributes to the FAD binding site. 504–630 (QERKALGHTG…KEKRYQKDVW (127 aa)) contacts NADP(+).

Requires FAD as cofactor. The cofactor is FMN.

Its function is as follows. Probable NADPH oxidoreductase that controls development beyond the mound stage. This is NADPH oxidoreductase A (redA) from Dictyostelium discoideum (Social amoeba).